Consider the following 584-residue polypeptide: Keratin, type I cytoskeletal 10 (584 aa).

Residues 1–15 are compositionally biased toward low complexity; it reads MSVRYSSSKHYSSSR. A disordered region spans residues 1 to 24; the sequence is MSVRYSSSKHYSSSRSGGGGGGGG. The head stretch occupies residues 1–145; that stretch reads MSVRYSSSKH…GGDGGLLSGN (145 aa). Phosphoserine occurs at positions 14, 16, 42, 53, 56, and 170. Residues 146-181 are coil 1A; the sequence is EKVTMQNLNDRLASYLDKVRALEESNYELEGKIKEW. In terms of domain architecture, IF rod spans 146–460; the sequence is EKVTMQNLND…SLLEGEGSSG (315 aa). Positions 182 to 202 are linker 1; sequence YEKHGNSHQGEPRDYSKYYKT. Residues 203 to 294 are coil 1B; sequence IDDLKNQILN…KNHEEEMKDL (92 aa). The linker 12 stretch occupies residues 295–317; sequence RNVSTGDVNVEMNAAPGVDLTQL. The tract at residues 318–456 is coil 2; sequence LNNMRSQYEQ…QTYRSLLEGE (139 aa). The interval 453–584 is disordered; the sequence is LEGEGSSGGG…GESSSKGPRY (132 aa). Gly residues predominate over residues 457 to 563; it reads GSSGGGGRGG…GGGYGGGSSS (107 aa). The tract at residues 457–584 is tail; sequence GSSGGGGRGG…GESSSKGPRY (128 aa). A compositionally biased stretch (low complexity) spans 564-584; it reads GGHKSSSSGSVGESSSKGPRY.

Belongs to the intermediate filament family. As to quaternary structure, heterotetramer of two type I and two type II keratins. Heterodimer with KRT1. Two heterodimers of KRT1 and KRT10 form a heterotetramer. The KRT10 subunit in the heterotetramer is probably disulfide-linked. Interacts with PLEC isoform 1C, when in a heterodimer with KRT1. (Microbial infection) Interacts (via C-terminal tail domain) with the S.aureus clumping factor, clfB; this interaction probably mediates S.aureus attachment to the keratinized squamous epithelial cells from the nasal cavity. In terms of assembly, (Microbial infection) Interacts (via the C-terminal tail domain) with S.pneumoniae serine-rich repeat protein PsrP; this interaction probably mediates S.pneumoniae adherence to lung tissue and subsequent pathogenesis. Neither protein has to be glycosylated for the interaction to occur. As to expression, seen in all suprabasal cell layers including stratum corneum. Expressed on the surface of lung cell lines. Localized on the surface of desquamated nasal epithelial cells (at protein level).

Its subcellular location is the secreted. The protein resides in the extracellular space. The protein localises to the cell surface. It is found in the cytoplasm. In terms of biological role, plays a role in the establishment of the epidermal barrier on plantar skin. Involved in the maintenance of cell layer development and keratin filament bundles in suprabasal cells of the epithelium. (Microbial infection) Acts as a mediator of S.aureus adherence to desquamated nasal epithelial cells via clfB, and hence may play a role in nasal colonization. Its function is as follows. (Microbial infection) Binds S.pneumoniae PsrP, mediating adherence of the bacteria to lung cell lines. Reduction of levels of KRT10 keratin decrease adherence, overexpression increases adherence. Neither protein has to be glycosylated for the interaction to occur. This chain is Keratin, type I cytoskeletal 10 (KRT10), found in Homo sapiens (Human).